The following is a 443-amino-acid chain: 3-phosphoshikimate 1-carboxyvinyltransferase (443 aa).

3-phosphoshikimate-binding residues include K24, S25, and R29. K24 lines the phosphoenolpyruvate pocket. Residues G96 and R124 each contribute to the phosphoenolpyruvate site. 3-phosphoshikimate contacts are provided by S168, Q170, D316, and K343. Q170 provides a ligand contact to phosphoenolpyruvate. The Proton acceptor role is filled by D316. Phosphoenolpyruvate-binding residues include R347 and R391.

The protein belongs to the EPSP synthase family. In terms of assembly, monomer.

It is found in the cytoplasm. It catalyses the reaction 3-phosphoshikimate + phosphoenolpyruvate = 5-O-(1-carboxyvinyl)-3-phosphoshikimate + phosphate. Its pathway is metabolic intermediate biosynthesis; chorismate biosynthesis; chorismate from D-erythrose 4-phosphate and phosphoenolpyruvate: step 6/7. Its function is as follows. Catalyzes the transfer of the enolpyruvyl moiety of phosphoenolpyruvate (PEP) to the 5-hydroxyl of shikimate-3-phosphate (S3P) to produce enolpyruvyl shikimate-3-phosphate and inorganic phosphate. The chain is 3-phosphoshikimate 1-carboxyvinyltransferase from Dichelobacter nodosus (Bacteroides nodosus).